The primary structure comprises 223 residues: Exosome complex component RRP46 (223 aa).

The protein belongs to the RNase PH family. Component of the RNA exosome complex. Specifically part of the catalytically inactive RNA exosome core complex (Exo-9) which may associate with the catalytic subunits RRP6 and DIS3 in cytoplasmic- and nuclear-specific RNA exosome complex forms. Exo-9 is formed by a hexameric base ring of RNase PH domain-containing subunits and a cap ring consisting of CSL4, RRP4 and RRP40.

It localises to the cytoplasm. The protein resides in the nucleus. It is found in the nucleolus. Non-catalytic component of the RNA exosome complex which has 3'-&gt;5' exoribonuclease activity and participates in a multitude of cellular RNA processing and degradation events. In the nucleus, the RNA exosome complex is involved in proper maturation of stable RNA species such as rRNA, snRNA and snoRNA, in the elimination of RNA processing by-products and non-coding 'pervasive' transcripts, such as antisense RNA species and cryptic unstable transcripts (CUTs), and of mRNAs with processing defects, thereby limiting or excluding their export to the cytoplasm. In the cytoplasm, the RNA exosome complex is involved in general mRNA turnover and in RNA surveillance pathways, preventing translation of aberrant mRNAs. The catalytic inactive RNA exosome core complex of 9 subunits (Exo-9) is proposed to play a pivotal role in the binding and presentation of RNA for ribonucleolysis, and to serve as a scaffold for the association with catalytic subunits and accessory proteins or complexes. RRP46 is part of the hexameric ring of RNase PH domain-containing subunits proposed to form a central channel which threads RNA substrates for degradation. This chain is Exosome complex component RRP46 (RRP46), found in Saccharomyces cerevisiae (strain ATCC 204508 / S288c) (Baker's yeast).